The primary structure comprises 842 residues: Follistatin-related protein 4 (842 aa).

The first 22 residues, 1–22 (MKPGGFWLHLTLLGASLPAALG), serve as a signal peptide directing secretion. A Kazal-like domain is found at 81 to 135 (KTGEPECQCLEACRPSYVPVCGSDGRFYENHCKLHRAACLLGKRITVIHSKDCFL). Intrachain disulfides connect cysteine 87/cysteine 119, cysteine 93/cysteine 112, and cysteine 101/cysteine 133. One can recognise an EF-hand domain in the interval 174-209 (QKRLLVESLFRDLDADGNGHLSSSELAQHVLKKQDL). Positions 187, 189, 191, 193, and 198 each coordinate Ca(2+). Ig-like domains follow at residues 251 to 338 (PEDR…LQVN) and 341 to 426 (PVIR…EDIS). 2 cysteine pairs are disulfide-bonded: cysteine 270–cysteine 321 and cysteine 362–cysteine 413. Asparagine 318 carries N-linked (GlcNAc...) asparagine glycosylation.

The protein localises to the secreted. The protein is Follistatin-related protein 4 (FSTL4) of Homo sapiens (Human).